The following is a 154-amino-acid chain: Low molecular weight protein-tyrosine-phosphatase PtpA (154 aa).

Cys-8 functions as the Nucleophile in the catalytic mechanism. The active site involves Arg-14. Asp-120 acts as the Proton donor in catalysis.

It belongs to the low molecular weight phosphotyrosine protein phosphatase family. As to quaternary structure, interacts with host CORO1A. Phosphorylations at Tyr-122 and Tyr-123 are essential for phosphatase activity.

Its subcellular location is the secreted. It catalyses the reaction O-phospho-L-tyrosyl-[protein] + H2O = L-tyrosyl-[protein] + phosphate. Its function is as follows. Secreted tyrosine phosphatase that plays a critical role during infection as a bacterial effector protein that counteracts host defenses. Required for intramacrophage survival. The chain is Low molecular weight protein-tyrosine-phosphatase PtpA (ptpA) from Staphylococcus aureus (strain bovine RF122 / ET3-1).